We begin with the raw amino-acid sequence, 347 residues long: Selenide, water dikinase (347 aa).

Residue Cys-17 is part of the active site. Residues Lys-20 and 48 to 50 contribute to the ATP site; that span reads TRD. Asp-51 lines the Mg(2+) pocket. ATP is bound by residues Asp-68, Asp-91, and 139–141; that span reads GHS. Asp-91 contributes to the Mg(2+) binding site. Residue Asp-227 participates in Mg(2+) binding.

The protein belongs to the selenophosphate synthase 1 family. Class I subfamily. As to quaternary structure, homodimer. Mg(2+) is required as a cofactor.

The enzyme catalyses hydrogenselenide + ATP + H2O = selenophosphate + AMP + phosphate + 2 H(+). Synthesizes selenophosphate from selenide and ATP. The sequence is that of Selenide, water dikinase from Escherichia coli O9:H4 (strain HS).